Here is a 425-residue protein sequence, read N- to C-terminus: Histidine--tRNA ligase 1 (425 aa).

It belongs to the class-II aminoacyl-tRNA synthetase family. As to quaternary structure, homodimer.

Its subcellular location is the cytoplasm. The catalysed reaction is tRNA(His) + L-histidine + ATP = L-histidyl-tRNA(His) + AMP + diphosphate + H(+). This is Histidine--tRNA ligase 1 from Bacillus cereus (strain ZK / E33L).